The following is a 367-amino-acid chain: Dihydroorotate dehydrogenase (quinone) (367 aa).

FMN-binding positions include 61–65 (AGFDK) and Thr85. Residue Lys65 coordinates substrate. Residue 110–114 (NRMGF) coordinates substrate. Residues Asn138 and Asn169 each coordinate FMN. Residue Asn169 participates in substrate binding. Ser172 (nucleophile) is an active-site residue. Asn174 contacts substrate. 2 residues coordinate FMN: Lys212 and Thr240. 241 to 242 (NT) serves as a coordination point for substrate. Residues Gly263, Gly292, and 313–314 (YS) contribute to the FMN site.

The protein belongs to the dihydroorotate dehydrogenase family. Type 2 subfamily. Monomer. It depends on FMN as a cofactor.

Its subcellular location is the cell membrane. The catalysed reaction is (S)-dihydroorotate + a quinone = orotate + a quinol. Its pathway is pyrimidine metabolism; UMP biosynthesis via de novo pathway; orotate from (S)-dihydroorotate (quinone route): step 1/1. In terms of biological role, catalyzes the conversion of dihydroorotate to orotate with quinone as electron acceptor. This chain is Dihydroorotate dehydrogenase (quinone), found in Rhodospirillum rubrum (strain ATCC 11170 / ATH 1.1.1 / DSM 467 / LMG 4362 / NCIMB 8255 / S1).